Consider the following 312-residue polypeptide: Pantothenate kinase (312 aa).

ATP is bound at residue 97-104; that stretch reads GSVAVGKS.

This sequence belongs to the prokaryotic pantothenate kinase family.

It localises to the cytoplasm. The catalysed reaction is (R)-pantothenate + ATP = (R)-4'-phosphopantothenate + ADP + H(+). It participates in cofactor biosynthesis; coenzyme A biosynthesis; CoA from (R)-pantothenate: step 1/5. This Mycolicibacterium smegmatis (strain ATCC 700084 / mc(2)155) (Mycobacterium smegmatis) protein is Pantothenate kinase.